The sequence spans 167 residues: 3-dehydroquinate dehydratase (167 aa).

Catalysis depends on Y22, which acts as the Proton acceptor. Substrate contacts are provided by N76, H82, and D89. The Proton donor role is filled by H102. Substrate-binding positions include L103–T104 and R113.

This sequence belongs to the type-II 3-dehydroquinase family. As to quaternary structure, homododecamer.

The enzyme catalyses 3-dehydroquinate = 3-dehydroshikimate + H2O. It participates in metabolic intermediate biosynthesis; chorismate biosynthesis; chorismate from D-erythrose 4-phosphate and phosphoenolpyruvate: step 3/7. Functionally, catalyzes a trans-dehydration via an enolate intermediate. The sequence is that of 3-dehydroquinate dehydratase from Helicobacter pylori (strain P12).